A 428-amino-acid chain; its full sequence is Nuclear hormone receptor family member nhr-44 (428 aa).

Residues 21-98 (SEKCLVCFQP…LGMKPDNIQR (78 aa)) constitute a DNA-binding region (nuclear receptor). 2 NR C4-type zinc fingers span residues 24–44 (CLVC…CRAC) and 61–86 (CREG…SDKC). Residues 181–427 (SLEQLAFGLQ…LSHPEMFQFS (247 aa)) enclose the NR LBD domain.

Belongs to the nuclear hormone receptor family.

It localises to the nucleus. Its function is as follows. Orphan nuclear receptor. The chain is Nuclear hormone receptor family member nhr-44 (nhr-44) from Caenorhabditis elegans.